The primary structure comprises 522 residues: E3 ubiquitin-protein ligase DMA2 (522 aa).

Disordered regions lie at residues 1–56 (MYTP…RPAS) and 69–92 (QNSQ…PSNS). The span at 14-35 (APTSSMTSNSSSASNANTTSSS) shows a compositional bias: low complexity. Polar residues predominate over residues 36 to 49 (GINPRNRASGTPSN). Ser206 is modified (phosphoserine). Residues Lys211, Lys256, Lys258, Lys288, Lys310, Lys333, Lys343, Lys346, Lys366, Lys406, Lys412, and Lys423 each participate in a glycyl lysine isopeptide (Lys-Gly) (interchain with G-Cter in ubiquitin) cross-link. The FHA domain maps to 295–358 (LVIGRYTERV…SGTFLNHQRL (64 aa)). An RING-type; atypical zinc finger spans residues 433 to 477 (CSICLCKIKPCQAIFISPCAHSWHFRCVRRLVMLSYPQFVCPNCR).

Belongs to the DMA1 family. In terms of processing, UBC4-dependent autoubiquitination occurs at Lys-211, Lys-258, Lys-288, Lys-310, Lys-333, Lys-343, Lys-346, Lys-366, Lys-406, Lys-412 and Lys-423. UBC13/MMS2-dependent autoubiquitination occurs at Lys-258, Lys-310, Lys-346 and Lys-366. Lys-211, Lys-256, Lys-288, Lys-310, Lys-343, Lys-258, Lys-366 and Lys-412 are also ubiquitinated in trans by DMA1 E3 ligase in association with UBC4.

It is found in the cytoplasm. The enzyme catalyses S-ubiquitinyl-[E2 ubiquitin-conjugating enzyme]-L-cysteine + [acceptor protein]-L-lysine = [E2 ubiquitin-conjugating enzyme]-L-cysteine + N(6)-ubiquitinyl-[acceptor protein]-L-lysine.. Functionally, E3 ubiquitin-protein ligase which functions in cell cycle retarding in conjunction with the UBC4 and UBC13/MMS2 complex, 2 E2 ubiquitin conjugating enzymes. Involved in nutritional control of the cell cycle. Required for proper spindle positioning, likely regulating septin ring deposition at the bud neck. This Saccharomyces cerevisiae (strain YJM789) (Baker's yeast) protein is E3 ubiquitin-protein ligase DMA2 (DMA2).